Here is a 740-residue protein sequence, read N- to C-terminus: Catalase-peroxidase (740 aa).

Positions 1–14 (MTENHDAIVTDAKS) are enriched in basic and acidic residues. Positions 1–21 (MTENHDAIVTDAKSEGSGGCP) are disordered. The tryptophyl-tyrosyl-methioninium (Trp-Tyr) (with M-257) cross-link spans 108-231 (WHSAGTYRIS…LGAVQMGLIY (124 aa)). His109 functions as the Proton acceptor in the catalytic mechanism. A cross-link (tryptophyl-tyrosyl-methioninium (Tyr-Met) (with W-108)) is located at residues 231 to 257 (YVNPEGPNGNPDPIAAARDIRETFRRM). Heme b is bound at residue His272.

This sequence belongs to the peroxidase family. Peroxidase/catalase subfamily. Homodimer. Requires heme b as cofactor. Formation of the three residue Trp-Tyr-Met cross-link is important for the catalase, but not the peroxidase activity of the enzyme.

It catalyses the reaction H2O2 + AH2 = A + 2 H2O. The enzyme catalyses 2 H2O2 = O2 + 2 H2O. Functionally, bifunctional enzyme with both catalase and broad-spectrum peroxidase activity. In Streptomyces reticuli, this protein is Catalase-peroxidase.